The primary structure comprises 513 residues: OBERON-like protein (513 aa).

Residues 166 to 235 form a PHD-type zinc finger; that stretch reads NGFCNLCMCV…VFRCQACSXT (70 aa). Residues 372 to 469 adopt a coiled-coil conformation; it reads RELADKAREA…LYEKIKLQES (98 aa). The disordered stretch occupies residues 493-513; it reads YNGPPKADSQSNDCHPFRTNP. Residues 500 to 513 are compositionally biased toward polar residues; sequence DSQSNDCHPFRTNP.

Self-interacts and probably forms heteromers. Binds to VPg of pea seed borne mosaic virus (PSbMV), turnip mosaic virus (TuMV) and lettuce mosaic virus (LMV), but not with VPg of tobacco etch virus (TEV), cowpea mosaic virus (CPMV), tomato black ring virus (TBRV) and grapevine fan leaf virus (GFLV).

The protein localises to the nucleus. Functionally, required for the maintenance and/or establishment of both the shoot and root meristems, probably by controlling the expression of the meristem genes and of genes required for auxin responses. Involved in the development of the basal pole and in auxin-mediated root and vascular development in the embryo. Confers sensitivity to turnip mosaic virus (TuMV) probably by promoting viral movement and multiplication via interaction with TuMV VPg. The chain is OBERON-like protein (PVIP) from Pisum sativum (Garden pea).